A 116-amino-acid chain; its full sequence is Large ribosomal subunit protein uL18 (116 aa).

It belongs to the universal ribosomal protein uL18 family. In terms of assembly, part of the 50S ribosomal subunit; part of the 5S rRNA/L5/L18/L25 subcomplex. Contacts the 5S and 23S rRNAs.

This is one of the proteins that bind and probably mediate the attachment of the 5S RNA into the large ribosomal subunit, where it forms part of the central protuberance. The sequence is that of Large ribosomal subunit protein uL18 from Marinomonas sp. (strain MWYL1).